The sequence spans 408 residues: Neutral cholesterol ester hydrolase 1 (408 aa).

At 1-4 (MRSS) the chain is on the cytoplasmic side. Residues 5-25 (CVLLTALLALAAYYIYIPLPS) form a helical; Signal-anchor for type II membrane protein membrane-spanning segment. Over 26–408 (SVSDPWKLML…SYIKWLDQNL (383 aa)) the chain is Lumenal. The Involved in the stabilization of the negatively charged intermediate by the formation of the oxyanion hole signature appears at 113 to 115 (HGG). The active site involves Ser-191. Residues Asn-270 and Asn-287 are each glycosylated (N-linked (GlcNAc...) asparagine). Residues Asp-348 and His-378 contribute to the active site. N-linked (GlcNAc...) asparagine glycosylation occurs at Asn-389.

It belongs to the 'GDXG' lipolytic enzyme family. In terms of processing, N-glycosylated.

Its subcellular location is the cell membrane. The protein resides in the microsome. It catalyses the reaction a 1-O-alkyl-2-acetyl-sn-glycerol + H2O = a 1-O-alkyl-sn-glycerol + acetate + H(+). The enzyme catalyses 1-O-hexadecyl-2-acetyl-sn-glycerol + H2O = 1-O-hexadecyl-sn-glycerol + acetate + H(+). It carries out the reaction a cholesterol ester + H2O = cholesterol + a fatty acid + H(+). The catalysed reaction is cholesteryl (9Z-octadecenoate) + H2O = cholesterol + (9Z)-octadecenoate + H(+). Functionally, hydrolyzes 2-acetyl monoalkylglycerol ether (1-O-alkyl-2-acetyl-sn-glycerol), the penultimate precursor of the pathway for de novo synthesis of platelet-activating factor. May be responsible for the hydrolysis of cholesterol esters (such as cholesteryl (9Z-octadecenoate)) in macrophages. Also involved in organ detoxification by hydrolyzing exogenous organophosphorus compounds. This chain is Neutral cholesterol ester hydrolase 1 (NCEH1), found in Bos taurus (Bovine).